Reading from the N-terminus, the 306-residue chain is UDP-3-O-acyl-N-acetylglucosamine deacetylase (306 aa).

H79, H238, and D242 together coordinate Zn(2+). Catalysis depends on H265, which acts as the Proton donor.

This sequence belongs to the LpxC family. Requires Zn(2+) as cofactor.

It carries out the reaction a UDP-3-O-[(3R)-3-hydroxyacyl]-N-acetyl-alpha-D-glucosamine + H2O = a UDP-3-O-[(3R)-3-hydroxyacyl]-alpha-D-glucosamine + acetate. Its pathway is glycolipid biosynthesis; lipid IV(A) biosynthesis; lipid IV(A) from (3R)-3-hydroxytetradecanoyl-[acyl-carrier-protein] and UDP-N-acetyl-alpha-D-glucosamine: step 2/6. Functionally, catalyzes the hydrolysis of UDP-3-O-myristoyl-N-acetylglucosamine to form UDP-3-O-myristoylglucosamine and acetate, the committed step in lipid A biosynthesis. This chain is UDP-3-O-acyl-N-acetylglucosamine deacetylase, found in Shewanella baltica (strain OS223).